The following is a 243-amino-acid chain: 2,3-bisphosphoglycerate-dependent phosphoglycerate mutase (243 aa).

Residues 8-15, 21-22, Arg-60, 87-90, Lys-98, 114-115, and 183-184 contribute to the substrate site; these read RHGQSEWN, TG, ERHY, RR, and GN. The active-site Tele-phosphohistidine intermediate is the His-9. Glu-87 serves as the catalytic Proton donor/acceptor.

This sequence belongs to the phosphoglycerate mutase family. BPG-dependent PGAM subfamily. Homodimer.

It carries out the reaction (2R)-2-phosphoglycerate = (2R)-3-phosphoglycerate. It functions in the pathway carbohydrate degradation; glycolysis; pyruvate from D-glyceraldehyde 3-phosphate: step 3/5. Functionally, catalyzes the interconversion of 2-phosphoglycerate and 3-phosphoglycerate. The sequence is that of 2,3-bisphosphoglycerate-dependent phosphoglycerate mutase from Maricaulis maris (strain MCS10) (Caulobacter maris).